A 136-amino-acid polypeptide reads, in one-letter code: Ribulose bisphosphate carboxylase small subunit, chloroplastic 1 (136 aa).

The N-terminal 13 residues, 1-13 (NTDITSNGERVKC), are a transit peptide targeting the chloroplast.

Belongs to the RuBisCO small chain family. Heterohexadecamer of 8 large and 8 small subunits.

It is found in the plastid. Its subcellular location is the chloroplast. Functionally, ruBisCO catalyzes two reactions: the carboxylation of D-ribulose 1,5-bisphosphate, the primary event in carbon dioxide fixation, as well as the oxidative fragmentation of the pentose substrate. Both reactions occur simultaneously and in competition at the same active site. Although the small subunit is not catalytic it is essential for maximal activity. The sequence is that of Ribulose bisphosphate carboxylase small subunit, chloroplastic 1 from Pisum sativum (Garden pea).